Reading from the N-terminus, the 243-residue chain is Ribosomal RNA small subunit methyltransferase G (243 aa).

S-adenosyl-L-methionine is bound by residues Gly-79, Phe-84, 130 to 131 (AE), and Arg-150. The tract at residues 219-243 (EKKKQTPNKYPRKPGTPGKDPIGKK) is disordered.

It belongs to the methyltransferase superfamily. RNA methyltransferase RsmG family.

It localises to the cytoplasm. Specifically methylates the N7 position of a guanine in 16S rRNA. This is Ribosomal RNA small subunit methyltransferase G from Pediococcus pentosaceus (strain ATCC 25745 / CCUG 21536 / LMG 10740 / 183-1w).